Reading from the N-terminus, the 266-residue chain is Oxidoreductase aflX (266 aa).

This sequence belongs to the avfA family.

It functions in the pathway mycotoxin biosynthesis; aflatoxin biosynthesis. Functionally, oxidoreductase; part of the gene cluster that mediates the biosynthesis of aflatoxins, a group of polyketide-derived furanocoumarins, and part of the most toxic and carcinogenic compounds among the known mycotoxins. The four major aflatoxins produced by A.parasiticus are aflatoxin B1 (AFB1), aflatoxin B2 (AFB2), aflatoxin G1 (AFG1) and aflatoxin G2 (AFG2). Within the aflatoxin pathway, the oxidoreductase aflX seems to be involved in the conversion of versicolorin A (VERA) to demethylsterigmatocystin (DMST), through probable epoxide ring-opening step following versicolorin A oxidation required for the formation of the xanthone ring. The biosynthesis of aflatoxins begins with the norsolorinic acid synthase aflC that combines a hexanoyl starter unit produced by the fatty acid synthase aflA/aflB and 7 malonyl-CoA extender units to synthesize the precursor NOR. The second step is the conversion of NOR to averantin and requires the norsolorinic acid ketoreductase aflD, which catalyzes the dehydration of norsolorinic acid to form (1'S)-averantin. The norsolorinic acid reductases aflE and aflF may also play a role in the conversion of NOR to AVN. The cytochrome P450 monooxygenase aflG then catalyzes the hydroxylation of AVN to 5'hydroxyaverantin (HAVN). The next step is performed by the 5'-hydroxyaverantin dehydrogenase aflH that transforms HAVN to 5'-oxoaverantin (OAVN) which is further converted to averufin (AVF) by aflK that plays a dual role in the pathway, as a 5'-oxoaverantin cyclase that mediates conversion of 5'-oxoaverantin, as well as a versicolorin B synthase in a later step in the pathway. The averufin oxidase aflI catalyzes the conversion of AVF to versiconal hemiacetal acetate (VHA). VHA is then the substrate for the versiconal hemiacetal acetate esterase aflJ to yield versiconal (VAL). Versicolorin B synthase aflK then converts VAL to versicolorin B (VERB) by closing the bisfuran ring of aflatoxin which is required for DNA-binding, thus giving to aflatoxin its activity as a mutagen. Then, the activity of the versicolorin B desaturase aflL leads to versicolorin A (VERA). A branch point starts from VERB since it can also be converted to dihydrodemethylsterigmatocystin (DMDHST), probably also by aflL, VERA being a precursor for aflatoxins B1 and G1, and DMDHST for aflatoxins B2 and G2. Next, the versicolorin reductase aflM and the cytochrome P450 monooxygenase aflN are involved in conversion of VERA to demethylsterigmatocystin (DMST). AflX and aflY seem also involved in this step, through probable aflX-mediated epoxide ring-opening step following versicolorin A oxidation and aflY-mediated Baeyer-Villiger oxidation required for the formation of the xanthone ring. The methyltransferase aflO then leads to the modification of DMST to sterigmatocystin (ST), and of DMDHST to dihydrosterigmatocystin (DHST). Both ST and DHST are then substrates of the O-methyltransferase aflP to yield O-methylsterigmatocystin (OMST) and dihydro-O-methylsterigmatocystin (DHOMST), respectively. Finally OMST is converted to aflatoxins B1 and G1, and DHOMST to aflatoxins B2 and G2, via the action of several enzymes including O-methylsterigmatocystin oxidoreductase aflQ, the cytochrome P450 monooxygenase aflU, but also the NADH-dependent flavin oxidoreductase nadA which is specifically required for the synthesis of AFG1. This Aspergillus parasiticus (strain ATCC 56775 / NRRL 5862 / SRRC 143 / SU-1) protein is Oxidoreductase aflX.